The following is a 131-amino-acid chain: Small ribosomal subunit protein bS6 (131 aa).

Residues 96–131 (ITEASPMAKAKDERDSRRGPAGDRSYDEANAEEIAE) form a disordered region. The span at 104–122 (KAKDERDSRRGPAGDRSYD) shows a compositional bias: basic and acidic residues.

The protein belongs to the bacterial ribosomal protein bS6 family.

In terms of biological role, binds together with bS18 to 16S ribosomal RNA. In Shewanella oneidensis (strain ATCC 700550 / JCM 31522 / CIP 106686 / LMG 19005 / NCIMB 14063 / MR-1), this protein is Small ribosomal subunit protein bS6.